Reading from the N-terminus, the 710-residue chain is E3 ubiquitin-protein ligase TRIM9 (710 aa).

Residues 10-50 (CPVCGSFYREPIILPCSHNLCQACARNILVQTPESESPQSR) form an RING-type zinc finger. Thr-41 carries the post-translational modification Phosphothreonine. Ser-44, Ser-46, Ser-49, and Ser-53 each carry phosphoserine. B box-type zinc fingers lie at residues 163-212 (AAAL…LVPP) and 224-266 (RKVS…VKAL). Residues Cys-168, Cys-171, Cys-193, His-198, Cys-229, His-232, Cys-252, and His-258 each coordinate Zn(2+). Residues 273-340 (HKSQLSQALN…KAQLLARVNK (68 aa)) adopt a coiled-coil conformation. The COS domain maps to 374–432 (IKENDPSGFLQISDALIRRVHLTEDQWGKGTLTPRMTTDFDLSLDNSPLLQSIHQLDFV). The region spanning 440–535 (VPATPILQLE…KTLVLQTSEV (96 aa)) is the Fibronectin type-III domain. Residues 533 to 702 (SEVAWFAFDP…LHTGLPVPDF (170 aa)) enclose the B30.2/SPRY domain.

Interacts with SNAP25. In terms of processing, auto-ubiquitinated. As to expression, brain (at protein level). Expressed in fetal and adult brain.

The protein resides in the cytoplasmic vesicle. The protein localises to the secretory vesicle. It is found in the synaptic vesicle. Its subcellular location is the synapse. It localises to the cytoplasm. The protein resides in the cytoskeleton. The protein localises to the cell projection. It is found in the dendrite. It carries out the reaction S-ubiquitinyl-[E2 ubiquitin-conjugating enzyme]-L-cysteine + [acceptor protein]-L-lysine = [E2 ubiquitin-conjugating enzyme]-L-cysteine + N(6)-ubiquitinyl-[acceptor protein]-L-lysine.. It participates in protein modification; protein ubiquitination. E3 ubiquitin-protein ligase which ubiquitinates itself in cooperation with an E2 enzyme UBE2D2/UBC4 and serves as a targeting signal for proteasomal degradation. May play a role in regulation of neuronal functions. May act as a regulator of synaptic vesicle exocytosis by controlling the availability of SNAP25 for the SNARE complex formation. This is E3 ubiquitin-protein ligase TRIM9 (Trim9) from Rattus norvegicus (Rat).